A 249-amino-acid polypeptide reads, in one-letter code: MSDQKKLRLGVNIDHVATVRNARGGAYPDPLRAARIAEEAGADGITAHLREDRRHISDADIEGLMDVLSVPLNFEMAATDEMQQIALRHKPHAVCIVPEKREERTTEGGLEVAREENVLAHFIAPLREAGCRVSIFIAAEQRQIEAAHRIGAEVIELHTGAYCDAHAEGDFAQRDAELARLRDMATFAHGLGLEVHAGHGLTYDTVQPIAAFPEVIELNIGHFLIGESIFRGLEPAIAEMRRLMDAARA.

N12 is a 3-amino-2-oxopropyl phosphate binding site. 14 to 15 (DH) contributes to the 1-deoxy-D-xylulose 5-phosphate binding site. Residue R23 coordinates 3-amino-2-oxopropyl phosphate. The Proton acceptor role is filled by H48. Residues R50 and H55 each coordinate 1-deoxy-D-xylulose 5-phosphate. E75 (proton acceptor) is an active-site residue. T105 is a binding site for 1-deoxy-D-xylulose 5-phosphate. H199 acts as the Proton donor in catalysis. Residues G200 and 221–222 (GH) contribute to the 3-amino-2-oxopropyl phosphate site.

It belongs to the PNP synthase family. As to quaternary structure, homooctamer; tetramer of dimers.

The protein localises to the cytoplasm. The catalysed reaction is 3-amino-2-oxopropyl phosphate + 1-deoxy-D-xylulose 5-phosphate = pyridoxine 5'-phosphate + phosphate + 2 H2O + H(+). It functions in the pathway cofactor biosynthesis; pyridoxine 5'-phosphate biosynthesis; pyridoxine 5'-phosphate from D-erythrose 4-phosphate: step 5/5. In terms of biological role, catalyzes the complicated ring closure reaction between the two acyclic compounds 1-deoxy-D-xylulose-5-phosphate (DXP) and 3-amino-2-oxopropyl phosphate (1-amino-acetone-3-phosphate or AAP) to form pyridoxine 5'-phosphate (PNP) and inorganic phosphate. The polypeptide is Pyridoxine 5'-phosphate synthase (Roseobacter denitrificans (strain ATCC 33942 / OCh 114) (Erythrobacter sp. (strain OCh 114))).